Consider the following 212-residue polypeptide: Uridine kinase (212 aa).

13 to 20 (GGSGSGKT) serves as a coordination point for ATP.

It belongs to the uridine kinase family.

Its subcellular location is the cytoplasm. It carries out the reaction uridine + ATP = UMP + ADP + H(+). The catalysed reaction is cytidine + ATP = CMP + ADP + H(+). It participates in pyrimidine metabolism; CTP biosynthesis via salvage pathway; CTP from cytidine: step 1/3. Its pathway is pyrimidine metabolism; UMP biosynthesis via salvage pathway; UMP from uridine: step 1/1. This Bacillus anthracis (strain A0248) protein is Uridine kinase.